Here is a 382-residue protein sequence, read N- to C-terminus: Intermediate transcription factor 3 large subunit (382 aa).

It belongs to the orthopoxvirus OPG150 family. As to quaternary structure, heterodimerizes with protein A8 to form the virus intermediate transcription factor (VITF)-3.

In terms of biological role, acts with RNA polymerase to initiate transcription from intermediate gene promoters. In Homo sapiens (Human), this protein is Intermediate transcription factor 3 large subunit (OPG150).